The chain runs to 525 residues: GMP synthase [glutamine-hydrolyzing] (525 aa).

The 200-residue stretch at 8–207 folds into the Glutamine amidotransferase type-1 domain; the sequence is KILILDFGSQ…ALDICGCAAN (200 aa). The Nucleophile role is filled by Cys-85. Catalysis depends on residues His-181 and Glu-183. The 193-residue stretch at 208 to 400 folds into the GMPS ATP-PPase domain; the sequence is WKPSSIIEDA…LGLPYNMLYR (193 aa). 235-241 serves as a coordination point for ATP; sequence SGGVDSS.

In terms of assembly, homodimer.

It carries out the reaction XMP + L-glutamine + ATP + H2O = GMP + L-glutamate + AMP + diphosphate + 2 H(+). The protein operates within purine metabolism; GMP biosynthesis; GMP from XMP (L-Gln route): step 1/1. In terms of biological role, catalyzes the synthesis of GMP from XMP. The sequence is that of GMP synthase [glutamine-hydrolyzing] from Shewanella baltica (strain OS155 / ATCC BAA-1091).